The following is a 228-amino-acid chain: 3,4-dihydroxy-2-butanone 4-phosphate synthase (228 aa).

D-ribulose 5-phosphate contacts are provided by residues Arg37–Glu38, Asp42, Arg150–Thr154, and Glu174. Glu38 contributes to the Mg(2+) binding site. Residue His153 coordinates Mg(2+).

Belongs to the DHBP synthase family. As to quaternary structure, homodimer. It depends on Mg(2+) as a cofactor. Mn(2+) is required as a cofactor.

It catalyses the reaction D-ribulose 5-phosphate = (2S)-2-hydroxy-3-oxobutyl phosphate + formate + H(+). Its pathway is cofactor biosynthesis; riboflavin biosynthesis; 2-hydroxy-3-oxobutyl phosphate from D-ribulose 5-phosphate: step 1/1. Its function is as follows. Catalyzes the conversion of D-ribulose 5-phosphate to formate and 3,4-dihydroxy-2-butanone 4-phosphate. This Chloroherpeton thalassium (strain ATCC 35110 / GB-78) protein is 3,4-dihydroxy-2-butanone 4-phosphate synthase.